The sequence spans 126 residues: Aspartate 1-decarboxylase (126 aa).

Catalysis depends on Ser-25, which acts as the Schiff-base intermediate with substrate; via pyruvic acid. Ser-25 carries the post-translational modification Pyruvic acid (Ser). Residue Thr-57 coordinates substrate. Residue Tyr-58 is the Proton donor of the active site. 73–75 (GAA) contacts substrate.

This sequence belongs to the PanD family. Heterooctamer of four alpha and four beta subunits. Requires pyruvate as cofactor. Is synthesized initially as an inactive proenzyme, which is activated by self-cleavage at a specific serine bond to produce a beta-subunit with a hydroxyl group at its C-terminus and an alpha-subunit with a pyruvoyl group at its N-terminus.

The protein resides in the cytoplasm. The enzyme catalyses L-aspartate + H(+) = beta-alanine + CO2. Its pathway is cofactor biosynthesis; (R)-pantothenate biosynthesis; beta-alanine from L-aspartate: step 1/1. Its function is as follows. Catalyzes the pyruvoyl-dependent decarboxylation of aspartate to produce beta-alanine. The protein is Aspartate 1-decarboxylase of Escherichia coli O6:H1 (strain CFT073 / ATCC 700928 / UPEC).